Here is a 1362-residue protein sequence, read N- to C-terminus: Bromodomain-containing protein 4B (1362 aa).

6 disordered regions span residues 22-57 (EGAQ…QPKR), 200-243 (SLGD…HPPA), 274-367 (LANH…DSKT), 476-639 (DEPE…SYEE), 699-941 (CLRK…TQSP), and 953-1349 (SQAP…MNFQ). Over residues 34–49 (QPQPQTPMMQTPPPEI) the composition is skewed to pro residues. The region spanning 57–163 (RQTNQLQYLL…KLFLQKISEM (107 aa)) is the Bromo 1 domain. The span at 219–234 (TPTPPAVIRAPTPPQT) shows a compositional bias: pro residues. Basic and acidic residues predominate over residues 326 to 342 (PRKESGRQIRPIKKTEV). Residues 348-358 (PAPPDLHPQPA) are compositionally biased toward pro residues. Residues 365–474 (SKTSEQLRYC…DVFEMRFAKM (110 aa)) enclose the Bromo 2 domain. Residues 481 to 503 (APAPVPSPAPGPPAPSIKIPPPT) are compositionally biased toward pro residues. Residues 503-521 (TSSDTSSDSSSDSESSSDS) form an NPS region region. The span at 504 to 516 (SSDTSSDSSSDSE) shows a compositional bias: low complexity. The tract at residues 542–597 (QLAALSQPQPNKPKKKEREKRKEKHKRKEEVEETRKGRIREPPAKKPKKSVQVSGG) is BID region. Positions 553–568 (KPKKKEREKRKEKHKR) are enriched in basic residues. A compositionally biased stretch (basic and acidic residues) spans 569–585 (KEEVEETRKGRIREPPA). Pro residues predominate over residues 606-621 (PPPVTRPARPAPPPAP). In terms of domain architecture, NET spans 623–707 (ESSEEDTQRC…SCLRKKRKPQ (85 aa)). A compositionally biased stretch (basic and acidic residues) spans 628–639 (DTQRCRPMSYEE). Over residues 722–737 (SYSSSESESSSESSTS) the composition is skewed to low complexity. Over residues 750-766 (QKKKGHSGRESRKHHHP) the composition is skewed to basic residues. Composition is skewed to pro residues over residues 772–793 (IAPP…PPPS) and 871–889 (PARP…PHHQ). Residues 893–905 (HVHHHHHHHHHAQ) are compositionally biased toward basic residues. The span at 926–941 (YLQQLHKSQQPPTQSP) shows a compositional bias: polar residues. Low complexity-rich tracts occupy residues 953–963 (SQAPMAAPAQS), 977–1006 (SSAS…QPAG), 1014–1028 (QQQQ…PALQ), and 1041–1050 (HQQAKQQQVI). Residues 1061–1361 (RQQKQETYPG…LMEIFEQNLF (301 aa)) form a C-terminal (CTD) region region. Residues 1086–1099 (QVPPYPGLTHPPSP) are compositionally biased toward pro residues. Basic and acidic residues predominate over residues 1186–1207 (PEKEKQKQEPKTPVAPKKDLKI). Residues 1224–1234 (PTSAGKSTSDS) are compositionally biased toward polar residues. Residues 1236–1293 (ELFRRQAREKEERERALKHQAEQAERMRREQERMRTREDDDVQDQTRKAHEEARRRQE) show a composition bias toward basic and acidic residues. Residues 1308–1319 (PAAPSPAQSSQP) show a composition bias toward low complexity. The span at 1322-1334 (DQREMARKREQER) shows a compositional bias: basic and acidic residues.

Belongs to the BET family.

It is found in the nucleus. The protein resides in the chromosome. Chromatin reader protein that recognizes and binds acetylated histones and plays a key role in transmission of epigenetic memory across cell divisions and transcription regulation. Remains associated with acetylated chromatin throughout the entire cell cycle and provides epigenetic memory for postmitotic G1 gene transcription by preserving acetylated chromatin status and maintaining high-order chromatin structure. During interphase, plays a key role in regulating the transcription of signal-inducible genes by associating with the P-TEFb complex and recruiting it to promoters. This is Bromodomain-containing protein 4B (brd4-b) from Xenopus laevis (African clawed frog).